A 262-amino-acid chain; its full sequence is Versicolorin reductase 1 (262 aa).

Residues I21, D67, N94, and R127 each contribute to the NADP(+) site. Catalysis depends on proton donor residues S143 and S144. Positions 158, 162, 191, and 193 each coordinate NADP(+). The Proton acceptor role is filled by Y158. K162 (lowers pKa of active site Tyr) is an active-site residue.

It belongs to the short-chain dehydrogenases/reductases (SDR) family.

It localises to the cytoplasm. Its subcellular location is the cytosol. The enzyme catalyses (4S,8R)-2,13,16,20-tetrahydroxy-7,9-dioxapentacyclo[10.8.0.0(3,10).0(4,8).0(14,19)]icosa-1(12),2,5,10,13,16,19-heptaen-18-one + NADPH + H(+) = (4S,8R,16R)-2,13,16,20-tetrahydroxy-7,9-dioxapentacyclo[10.8.0.0(3,10).0(4,8).0(14,19)]icosa-1(12),2,5,10,13,19-hexaen-18-one + NADP(+). The protein operates within mycotoxin biosynthesis; aflatoxin biosynthesis. Functionally, cytochrome P450 monooxygenase; part of the gene cluster that mediates the biosynthesis of aflatoxins, a group of polyketide-derived furanocoumarins, and part of the most toxic and carcinogenic compounds among the known mycotoxins. The four major aflatoxins produced by A.parasiticus are aflatoxin B1 (AFB1), aflatoxin B2 (AFB2), aflatoxin G1 (AFG1) and aflatoxin G2 (AFG2). Within the aflatoxin pathway, with the cytochrome P450 monooxygenase aflN, the versicolorin reductase aflM, is involved in conversion of VERA to demethylsterigmatocystin (DMST). The biosynthesis of aflatoxins begins with the norsolorinic acid synthase aflC that combines a hexanoyl starter unit produced by the fatty acid synthase aflA/aflB and 7 malonyl-CoA extender units to synthesize the precursor NOR. The second step is the conversion of NOR to averantin and requires the norsolorinic acid ketoreductase aflD, which catalyzes the dehydration of norsolorinic acid to form (1'S)-averantin. The norsolorinic acid reductases aflE and aflF may also play a role in the conversion of NOR to AVN. The cytochrome P450 monooxygenase aflG then catalyzes the hydroxylation of AVN to 5'hydroxyaverantin (HAVN). The next step is performed by the 5'-hydroxyaverantin dehydrogenase aflH that transforms HAVN to 5'-oxoaverantin (OAVN) which is further converted to averufin (AVF) by aflK that plays a dual role in the pathway, as a 5'-oxoaverantin cyclase that mediates conversion of 5'-oxoaverantin, as well as a versicolorin B synthase in a later step in the pathway. The averufin oxidase aflI catalyzes the conversion of AVF to versiconal hemiacetal acetate (VHA). VHA is then the substrate for the versiconal hemiacetal acetate esterase aflJ to yield versiconal (VAL). Versicolorin B synthase aflK then converts VAL to versicolorin B (VERB) by closing the bisfuran ring of aflatoxin which is required for DNA-binding, thus giving to aflatoxin its activity as a mutagen. Then, the activity of the versicolorin B desaturase aflL leads to versicolorin A (VERA). A branch point starts from VERB since it can also be converted to dihydrodemethylsterigmatocystin (DMDHST), probably also by aflL, VERA being a precursor for aflatoxins B1 and G1, and DMDHST for aflatoxins B2 and G2. Next, the versicolorin reductase aflM and the cytochrome P450 monooxygenase aflN are involved in conversion of VERA to demethylsterigmatocystin (DMST). AflX and aflY seem also involved in this step, through probable aflX-mediated epoxide ring-opening step following versicolorin A oxidation and aflY-mediated Baeyer-Villiger oxidation required for the formation of the xanthone ring. The methyltransferase aflO then leads to the modification of DMST to sterigmatocystin (ST), and of DMDHST to dihydrosterigmatocystin (DHST). Both ST and DHST are then substrates of the O-methyltransferase aflP to yield O-methylsterigmatocystin (OMST) and dihydro-O-methylsterigmatocystin (DHOMST), respectively. Finally OMST is converted to aflatoxins B1 and G1, and DHOMST to aflatoxins B2 and G2, via the action of several enzymes including O-methylsterigmatocystin oxidoreductase aflQ, the cytochrome P450 monooxygenase aflU, but also the NADH-dependent flavin oxidoreductase nadA which is specifically required for the synthesis of AFG1. The sequence is that of Versicolorin reductase 1 from Aspergillus parasiticus (strain ATCC 56775 / NRRL 5862 / SRRC 143 / SU-1).